We begin with the raw amino-acid sequence, 63 residues long: Conotoxin LeDr243 (63 aa).

An N-terminal signal peptide occupies residues Met-1–Ala-22. A propeptide spanning residues Arg-23–Ser-47 is cleaved from the precursor. Cys-60 bears the Cysteine amide mark. A propeptide spanning residues Leu-62 to Gly-63 is cleaved from the precursor.

The protein belongs to the conotoxin T superfamily. Post-translationally, contains 2 disulfide bonds that can be either 'C1-C3, C2-C4' or 'C1-C4, C2-C3', since these disulfide connectivities have been observed for conotoxins with cysteine framework V (for examples, see AC P0DQQ7 and AC P81755). As to expression, expressed by the venom duct.

The protein resides in the secreted. This Conus litteratus (Lettered cone) protein is Conotoxin LeDr243.